The following is an 80-amino-acid chain: MFSRAQVRRALQRVPGKQRFGIYRFLPFFFVLGGAMEWIMIKVRVGQETFYDVYRRKASERQYQRRLEDTSETNLHKLIK.

Topologically, residues 1-19 (MFSRAQVRRALQRVPGKQR) are mitochondrial matrix. Residues 20–41 (FGIYRFLPFFFVLGGAMEWIMI) form a helical membrane-spanning segment. The Mitochondrial intermembrane portion of the chain corresponds to 42-80 (KVRVGQETFYDVYRRKASERQYQRRLEDTSETNLHKLIK).

The protein belongs to the UQCC5 family. As to quaternary structure, associates with the mitochondrial ribosome. Interacts with UQCC6. Interacts with MT-CYB; interacts with newly synthesizes MT-CYB. Forms a complex, named COMB/coordinator of mitochondrial CYTB biogenesis, composed of UQCC1, UQCC2, UQCC4, UQCC5 and UQCC6; stabilizes nascent cytochrome b/MT-CYB and promotes its membrane insertion.

It is found in the mitochondrion inner membrane. Its function is as follows. Required for the assembly and stability of the mitochondrial ubiquinol-cytochrome c reductase complex (complex III (CIII) or cytochrome b-c1 complex), a multisubunit transmembrane complex that is part of the mitochondrial electron transport chain (ETC) which drives oxidative phosphorylation. Mediates early complex III biogenesis. Participates in regulating the levels of electron transport chain proteins, and therefore energy supply, in response to changes in energy demand. Also required for cytochrome c oxidase complex (complex IV) assembly. The polypeptide is Ubiquinol-cytochrome c reductase complex assembly factor 5 (Mus musculus (Mouse)).